Consider the following 463-residue polypeptide: Serine/threonine-protein kinase tricornered (463 aa).

In terms of domain architecture, Protein kinase spans 93-394; sequence FEALKVIGRG…LEDLKSVPFF (302 aa). ATP-binding positions include 99-107 and Lys-122; that span reads IGRGAFGEV. The segment at 119–180 is interaction with mats and Mob1; it reads YAMKVLRKAD…EFLPGGDMMT (62 aa). Residue Asp-216 is the Proton acceptor of the active site. Ser-292 carries the post-translational modification Phosphoserine. Residues 395-463 form the AGC-kinase C-terminal domain; it reads RGVDWEHIRE…YKRFEVRNLE (69 aa). Position 453 is a phosphothreonine (Thr-453).

It belongs to the protein kinase superfamily. AGC Ser/Thr protein kinase family. As to quaternary structure, interacts with, and is activated by, Mob1. Mg(2+) serves as cofactor. Expressed in the peripheral and central nervous system (at protein level). Expressed in the wing imaginal disk.

The protein localises to the cytoplasm. It localises to the nucleus. It catalyses the reaction L-seryl-[protein] + ATP = O-phospho-L-seryl-[protein] + ADP + H(+). The enzyme catalyses L-threonyl-[protein] + ATP = O-phospho-L-threonyl-[protein] + ADP + H(+). With respect to regulation, activated by fry. In terms of biological role, serine/threonine-protein kinase involved in controlling cell structure and proliferation of a variety of polarized outgrowths including epidermal hairs, bristles, arista laterals, and dendrites. Together with fry, maintains the integrity of epidermal hairs and is an essential component of the signaling pathway regulating dendritic branching of sensory neurons. Reduces neurite outgrowth by phosphorylating pav, thereby inhibiting its function in microtubule-microtubule sliding. The protein is Serine/threonine-protein kinase tricornered of Drosophila melanogaster (Fruit fly).